The primary structure comprises 893 residues: Probable ion channel CASTOR (893 aa).

The tract at residues 1–94 is disordered; it reads MPLDPDSSPA…APRRRDPRYA (94 aa). A compositionally biased stretch (pro residues) spans 65-85; the sequence is PLPPPEQQKQQQPPPTTPPPA. Residues 132 to 152 traverse the membrane as a helical segment; it reads TLRWSGMVSVAAIVLCFSSLV. The stretch at 156–178 forms a coiled coil; that stretch reads SSLHDQVHHLKAQLAEATTKLQS. A run of 3 helical transmembrane segments spans residues 210 to 230, 266 to 286, and 318 to 338; these read LLLS…MDLF, LVLL…LYGV, and LVSV…LGLV. 2 RCK N-terminal domains span residues 359–500 and 619–792; these read QSHT…ETVV and PERI…DYVL. Residues 389-415 adopt a coiled-coil conformation; it reads TIVVMAEKDKEEMEADIAKMEFDLKGT.

Belongs to the castor/pollux (TC 1.A.1.23) family. In terms of tissue distribution, expressed in roots, leaves, stems and panicles.

Its subcellular location is the nucleus membrane. Functionally, required for mycorrhizal symbiosis. In Oryza sativa subsp. japonica (Rice), this protein is Probable ion channel CASTOR.